Here is a 545-residue protein sequence, read N- to C-terminus: CTP synthase (545 aa).

Residues methionine 1–leucine 265 form an amidoligase domain region. Serine 15 is a binding site for CTP. Serine 15 contacts UTP. ATP is bound by residues serine 16–leucine 21 and aspartate 73. 2 residues coordinate Mg(2+): aspartate 73 and glutamate 141. Residues aspartate 148 to glutamate 150, lysine 188 to glutamine 193, and lysine 224 contribute to the CTP site. Residues lysine 188–glutamine 193 and lysine 224 contribute to the UTP site. Positions glutamate 290 to isoleucine 534 constitute a Glutamine amidotransferase type-1 domain. Glycine 349 lines the L-glutamine pocket. The active-site Nucleophile; for glutamine hydrolysis is the cysteine 376. Residues leucine 377 to glutamine 380, glutamate 400, and arginine 460 each bind L-glutamine. Active-site residues include histidine 507 and glutamate 509.

Belongs to the CTP synthase family. Homotetramer.

It carries out the reaction UTP + L-glutamine + ATP + H2O = CTP + L-glutamate + ADP + phosphate + 2 H(+). The catalysed reaction is L-glutamine + H2O = L-glutamate + NH4(+). The enzyme catalyses UTP + NH4(+) + ATP = CTP + ADP + phosphate + 2 H(+). The protein operates within pyrimidine metabolism; CTP biosynthesis via de novo pathway; CTP from UDP: step 2/2. Allosterically activated by GTP, when glutamine is the substrate; GTP has no effect on the reaction when ammonia is the substrate. The allosteric effector GTP functions by stabilizing the protein conformation that binds the tetrahedral intermediate(s) formed during glutamine hydrolysis. Inhibited by the product CTP, via allosteric rather than competitive inhibition. In terms of biological role, catalyzes the ATP-dependent amination of UTP to CTP with either L-glutamine or ammonia as the source of nitrogen. Regulates intracellular CTP levels through interactions with the four ribonucleotide triphosphates. In Tropheryma whipplei (strain Twist) (Whipple's bacillus), this protein is CTP synthase.